We begin with the raw amino-acid sequence, 158 residues long: Glutamyl-tRNA(Gln) amidotransferase subunit C, mitochondrial (158 aa).

Belongs to the GatC family. As to quaternary structure, subunit of the heterotrimeric GatCAB amidotransferase (AdT) complex, composed of A, B and C subunits.

It is found in the mitochondrion. The enzyme catalyses L-glutamyl-tRNA(Gln) + L-glutamine + ATP + H2O = L-glutaminyl-tRNA(Gln) + L-glutamate + ADP + phosphate + H(+). Functionally, allows the formation of correctly charged Gln-tRNA(Gln) through the transamidation of misacylated Glu-tRNA(Gln) in the mitochondria. The reaction takes place in the presence of glutamine and ATP through an activated gamma-phospho-Glu-tRNA(Gln). The chain is Glutamyl-tRNA(Gln) amidotransferase subunit C, mitochondrial from Drosophila grimshawi (Hawaiian fruit fly).